Here is a 476-residue protein sequence, read N- to C-terminus: Ribulose bisphosphate carboxylase large chain (476 aa).

A propeptide spanning residues 1 to 2 (MS) is cleaved from the precursor. Proline 3 is subject to N-acetylproline. At lysine 14 the chain carries N6,N6,N6-trimethyllysine. Substrate contacts are provided by asparagine 123 and threonine 173. Residue lysine 175 is the Proton acceptor of the active site. Lysine 177 serves as a coordination point for substrate. Lysine 201, aspartate 203, and glutamate 204 together coordinate Mg(2+). At lysine 201 the chain carries N6-carboxylysine. Substrate contacts are provided by arginine 295, histidine 327, and serine 379.

Belongs to the RuBisCO large chain family. Type I subfamily. Heterohexadecamer of 8 large chains and 8 small chains; disulfide-linked. The disulfide link is formed within the large subunit homodimers. Mg(2+) serves as cofactor. In terms of processing, the disulfide bond which can form in the large chain dimeric partners within the hexadecamer appears to be associated with oxidative stress and protein turnover.

It is found in the plastid. The protein localises to the chloroplast. The enzyme catalyses 2 (2R)-3-phosphoglycerate + 2 H(+) = D-ribulose 1,5-bisphosphate + CO2 + H2O. It catalyses the reaction D-ribulose 1,5-bisphosphate + O2 = 2-phosphoglycolate + (2R)-3-phosphoglycerate + 2 H(+). In terms of biological role, ruBisCO catalyzes two reactions: the carboxylation of D-ribulose 1,5-bisphosphate, the primary event in carbon dioxide fixation, as well as the oxidative fragmentation of the pentose substrate in the photorespiration process. Both reactions occur simultaneously and in competition at the same active site. The sequence is that of Ribulose bisphosphate carboxylase large chain from Barnadesia caryophylla (Xenophontia caryophylla).